The following is a 132-amino-acid chain: SLSHEKYYALGSGPARAMAAKIKDGNEEPVEELYKELGYRDSFDSTVLVIENDAVPPPAIVEKVAAACKVDPGKLTVIVTPTSSLAGGLQVVARVLEVAMHKAHALHFPLENIVDGFGSAPLCPPHPNFVKA.

This sequence belongs to the MCH family.

It localises to the cytoplasm. It carries out the reaction 5,10-methenyl-5,6,7,8-tetrahydromethanopterin + H2O = N(5)-formyl-5,6,7,8-tetrahydromethanopterin + H(+). It functions in the pathway one-carbon metabolism; formaldehyde degradation; formate from formaldehyde (H(4)MPT route): step 3/5. Functionally, catalyzes the hydrolysis of methenyl-H(4)MPT(+) to 5-formyl-H(4)MPT. The polypeptide is Methenyltetrahydromethanopterin cyclohydrolase (mch) (Methylomicrobium album (Methylobacter albus)).